Here is a 425-residue protein sequence, read N- to C-terminus: MRVLGIVVEYNPFHFGHLHHLEEAKKLINPDYVVAVMSGNFCQRGEPAIVNKFARTEIALKNGVDVVFELPVVYAIQDAGGFALGSVGVLDRTGVVTDIVFGSESGDVTFLRKVANLLTNQTPEFEKTFKRHLKMGYSYPNARKYALMDVLSNDVEKLSKSNDILGIEYIKALIKYSSDIQPHVIKRIGADYNDEQFKGKFSSASAVRKAIKENKFEQTKEALPEWTFKILEREFSEGRGPVFLEYFDFVIAMFRKLKREDFERIYSFNEGLDLRFYESARESGNLQDFVERVKAKRFTYSRIRRAIFHVLFDMEKSFVELSNEKGPQYLRVLGFTKRGRELLKAMKKNSKVPIISTASLYRNVLEEAKKKIAEGKVSWEIDESLYIWQFERDLLASDIYTFLYPNKFQRKAGMDFEYKVIEMLG.

Residues 7-20, glycine 102, asparagine 162, and 187-188 contribute to the ATP site; these read VVEY…HLHH and RI.

This sequence belongs to the TmcAL family.

It is found in the cytoplasm. The enzyme catalyses cytidine(34) in elongator tRNA(Met) + acetate + ATP = N(4)-acetylcytidine(34) in elongator tRNA(Met) + AMP + diphosphate. Catalyzes the formation of N(4)-acetylcytidine (ac(4)C) at the wobble position of elongator tRNA(Met), using acetate and ATP as substrates. First activates an acetate ion to form acetyladenylate (Ac-AMP) and then transfers the acetyl group to tRNA to form ac(4)C34. The chain is tRNA(Met) cytidine acetate ligase from Fervidobacterium nodosum (strain ATCC 35602 / DSM 5306 / Rt17-B1).